Reading from the N-terminus, the 163-residue chain is ATP synthase subunit b, sodium ion specific (163 aa).

The chain crosses the membrane as a helical span at residues 9–29; that stretch reads VSIDINMFWQIINFLILMFFF.

It belongs to the ATPase B chain family. F-type ATPases have 2 components, F(1) - the catalytic core - and F(0) - the membrane proton channel. F(1) has five subunits: alpha(3), beta(3), gamma(1), delta(1), epsilon(1). F(0) has three main subunits: a(1), b(2) and c(10-14). The alpha and beta chains form an alternating ring which encloses part of the gamma chain. F(1) is attached to F(0) by a central stalk formed by the gamma and epsilon chains, while a peripheral stalk is formed by the delta and b chains.

The protein localises to the cell inner membrane. Its function is as follows. F(1)F(0) ATP synthase produces ATP from ADP in the presence of a proton or sodium gradient. F-type ATPases consist of two structural domains, F(1) containing the extramembraneous catalytic core and F(0) containing the membrane proton channel, linked together by a central stalk and a peripheral stalk. During catalysis, ATP synthesis in the catalytic domain of F(1) is coupled via a rotary mechanism of the central stalk subunits to proton translocation. In terms of biological role, component of the F(0) channel, it forms part of the peripheral stalk, linking F(1) to F(0). This chain is ATP synthase subunit b, sodium ion specific (atpF), found in Ilyobacter tartaricus.